The sequence spans 1167 residues: Pesticidal crystal protein Cry1Ja (1167 aa).

This sequence belongs to the delta endotoxin family.

Promotes colloidosmotic lysis by binding to the midgut epithelial cells of many lepidopteran larvae. The polypeptide is Pesticidal crystal protein Cry1Ja (cry1Ja) (Bacillus thuringiensis).